A 185-amino-acid polypeptide reads, in one-letter code: Ribosome-recycling factor (185 aa).

The segment at 138 to 160 (AMDKAVKDGEVGEDEGARGEKEL) is disordered.

It belongs to the RRF family.

It is found in the cytoplasm. Its function is as follows. Responsible for the release of ribosomes from messenger RNA at the termination of protein biosynthesis. May increase the efficiency of translation by recycling ribosomes from one round of translation to another. This is Ribosome-recycling factor from Micrococcus luteus (strain ATCC 4698 / DSM 20030 / JCM 1464 / CCM 169 / CCUG 5858 / IAM 1056 / NBRC 3333 / NCIMB 9278 / NCTC 2665 / VKM Ac-2230) (Micrococcus lysodeikticus).